A 305-amino-acid chain; its full sequence is MKKFLKVWSVLTIICMTVVVFGGALVTKTGSADGCGNSWPLCNGQLVRLTDVTPEKLIEFMHRMTTGISSIFVIVLAICAWIYMKNRRETKPLAIIAVLFLIIQALMGMAAVVWGQNPYIMALHFGISIICYASIVLLALMIFEVDRKFDARNLVMGTKLRINIYALTIYTYLAVYTGALVRHEKASMAVPVWPFENGHFIMPTSVQDYVQYFHRLAAFILIVWLLYVTWLVFRDYRRYRVLTFSMVLSLVFIALQAVTGALSVYTGVNLYIALAHSLIITMLFALLCYLCLLASRSKSNRLRIK.

Over 1 to 6 the chain is Cytoplasmic; sequence MKKFLK. The chain crosses the membrane as a helical span at residues 7 to 27; the sequence is VWSVLTIICMTVVVFGGALVT. The Extracellular segment spans residues 28–63; that stretch reads KTGSADGCGNSWPLCNGQLVRLTDVTPEKLIEFMHR. Cys35 and Cys42 form a disulfide bridge. Residue Glu59 is part of the active site. Position 62 (His62) interacts with heme o. The chain crosses the membrane as a helical span at residues 64 to 84; it reads MTTGISSIFVIVLAICAWIYM. Residues 85 to 92 lie on the Cytoplasmic side of the membrane; it reads KNRRETKP. A helical transmembrane segment spans residues 93–113; the sequence is LAIIAVLFLIIQALMGMAAVV. Over 114-122 the chain is Extracellular; it reads WGQNPYIMA. Residues 123 to 143 form a helical membrane-spanning segment; the sequence is LHFGISIICYASIVLLALMIF. Residue His124 participates in heme o binding. The Cytoplasmic segment spans residues 144 to 160; sequence EVDRKFDARNLVMGTKL. A helical membrane pass occupies residues 161-181; sequence RINIYALTIYTYLAVYTGALV. At 182–212 the chain is on the extracellular side; that stretch reads RHEKASMAVPVWPFENGHFIMPTSVQDYVQY. The chain crosses the membrane as a helical span at residues 213 to 233; sequence FHRLAAFILIVWLLYVTWLVF. Heme b is bound at residue His214. The Cytoplasmic segment spans residues 234–240; sequence RDYRRYR. Residues 241–261 form a helical membrane-spanning segment; that stretch reads VLTFSMVLSLVFIALQAVTGA. The Extracellular segment spans residues 262-271; it reads LSVYTGVNLY. Residues 272-292 traverse the membrane as a helical segment; that stretch reads IALAHSLIITMLFALLCYLCL. His276 serves as a coordination point for heme b. The Cytoplasmic portion of the chain corresponds to 293–305; that stretch reads LASRSKSNRLRIK.

The protein belongs to the COX15/CtaA family. Type 1 subfamily. In terms of assembly, interacts with CtaB. Requires heme b as cofactor.

Its subcellular location is the cell membrane. The enzyme catalyses Fe(II)-heme o + 2 A + H2O = Fe(II)-heme a + 2 AH2. The protein operates within porphyrin-containing compound metabolism; heme A biosynthesis; heme A from heme O: step 1/1. Its function is as follows. Catalyzes the conversion of heme O to heme A by two successive hydroxylations of the methyl group at C8. The first hydroxylation forms heme I, the second hydroxylation results in an unstable dihydroxymethyl group, which spontaneously dehydrates, resulting in the formyl group of heme A. This Listeria monocytogenes serotype 4b (strain F2365) protein is Heme A synthase.